The following is a 94-amino-acid chain: Pyrimidine/purine nucleoside phosphorylase (94 aa).

Belongs to the nucleoside phosphorylase PpnP family.

It catalyses the reaction a purine D-ribonucleoside + phosphate = a purine nucleobase + alpha-D-ribose 1-phosphate. It carries out the reaction adenosine + phosphate = alpha-D-ribose 1-phosphate + adenine. The enzyme catalyses cytidine + phosphate = cytosine + alpha-D-ribose 1-phosphate. The catalysed reaction is guanosine + phosphate = alpha-D-ribose 1-phosphate + guanine. It catalyses the reaction inosine + phosphate = alpha-D-ribose 1-phosphate + hypoxanthine. It carries out the reaction thymidine + phosphate = 2-deoxy-alpha-D-ribose 1-phosphate + thymine. The enzyme catalyses uridine + phosphate = alpha-D-ribose 1-phosphate + uracil. The catalysed reaction is xanthosine + phosphate = alpha-D-ribose 1-phosphate + xanthine. Its function is as follows. Catalyzes the phosphorolysis of diverse nucleosides, yielding D-ribose 1-phosphate and the respective free bases. Can use uridine, adenosine, guanosine, cytidine, thymidine, inosine and xanthosine as substrates. Also catalyzes the reverse reactions. The protein is Pyrimidine/purine nucleoside phosphorylase of Shigella dysenteriae serotype 1 (strain Sd197).